A 47-amino-acid polypeptide reads, in one-letter code: Sperm protamine P1 (47 aa).

The protein belongs to the protamine P1 family. Testis.

The protein resides in the nucleus. It localises to the chromosome. Protamines substitute for histones in the chromatin of sperm during the haploid phase of spermatogenesis. They compact sperm DNA into a highly condensed, stable and inactive complex. This chain is Sperm protamine P1 (PRM1), found in Galeopterus variegatus (Malayan flying lemur).